The chain runs to 262 residues: Hydroxyethylthiazole kinase (262 aa).

Residue M50 participates in substrate binding. ATP contacts are provided by R125 and T171. G198 is a binding site for substrate.

It belongs to the Thz kinase family. Mg(2+) serves as cofactor.

It carries out the reaction 5-(2-hydroxyethyl)-4-methylthiazole + ATP = 4-methyl-5-(2-phosphooxyethyl)-thiazole + ADP + H(+). The protein operates within cofactor biosynthesis; thiamine diphosphate biosynthesis; 4-methyl-5-(2-phosphoethyl)-thiazole from 5-(2-hydroxyethyl)-4-methylthiazole: step 1/1. Catalyzes the phosphorylation of the hydroxyl group of 4-methyl-5-beta-hydroxyethylthiazole (THZ). This chain is Hydroxyethylthiazole kinase, found in Escherichia coli (strain 55989 / EAEC).